Reading from the N-terminus, the 206-residue chain is Ras-related protein RABG3d (206 aa).

Position 15-22 (15-22 (GDSGVGKT)) interacts with GTP. The Effector region motif lies at 37 to 45 (YKATIGADF). Residues 63 to 67 (DTAGQ), 125 to 128 (NKTD), and 158 to 159 (SA) each bind GTP. Residues C204 and C206 are each lipidated (S-geranylgeranyl cysteine). C206 carries the post-translational modification Cysteine methyl ester.

It belongs to the small GTPase superfamily. Rab family.

It localises to the cell membrane. In terms of biological role, intracellular vesicle trafficking and protein transport. The chain is Ras-related protein RABG3d (RABG3D) from Arabidopsis thaliana (Mouse-ear cress).